A 120-amino-acid polypeptide reads, in one-letter code: NAD(P)H-quinone oxidoreductase subunit 3, chloroplastic (120 aa).

Transmembrane regions (helical) follow at residues 9 to 29 (IFWA…FISG), 64 to 84 (MFAL…PWAM), and 88 to 108 (VLGV…IVGL).

Belongs to the complex I subunit 3 family. In terms of assembly, NDH is composed of at least 16 different subunits, 5 of which are encoded in the nucleus.

The protein localises to the plastid. Its subcellular location is the chloroplast thylakoid membrane. It catalyses the reaction a plastoquinone + NADH + (n+1) H(+)(in) = a plastoquinol + NAD(+) + n H(+)(out). The enzyme catalyses a plastoquinone + NADPH + (n+1) H(+)(in) = a plastoquinol + NADP(+) + n H(+)(out). NDH shuttles electrons from NAD(P)H:plastoquinone, via FMN and iron-sulfur (Fe-S) centers, to quinones in the photosynthetic chain and possibly in a chloroplast respiratory chain. The immediate electron acceptor for the enzyme in this species is believed to be plastoquinone. Couples the redox reaction to proton translocation, and thus conserves the redox energy in a proton gradient. The protein is NAD(P)H-quinone oxidoreductase subunit 3, chloroplastic of Guizotia abyssinica (Niger).